Reading from the N-terminus, the 667-residue chain is Bifunctional polymyxin resistance protein ArnA (667 aa).

A formyltransferase ArnAFT region spans residues 1–304 (MKAIVFAYHD…EMGIVTDVRL (304 aa)). Catalysis depends on histidine 104, which acts as the Proton donor; for formyltransferase activity. (6R)-10-formyltetrahydrofolate contacts are provided by residues arginine 114 and 136–140 (VKKAD). Positions 314–667 (RRTRVLILGV…TAAPKDELNA (354 aa)) are dehydrogenase ArnADH. Residues aspartate 347 and 368-369 (DI) contribute to the NAD(+) site. UDP-alpha-D-glucuronate contacts are provided by residues alanine 393, tyrosine 398, and 432-433 (TS). Glutamate 434 serves as the catalytic Proton acceptor; for decarboxylase activity. Residues arginine 460, asparagine 492, 526-535 (KLVDGGAQKR), and tyrosine 613 each bind UDP-alpha-D-glucuronate. Arginine 619 functions as the Proton donor; for decarboxylase activity in the catalytic mechanism.

This sequence in the N-terminal section; belongs to the Fmt family. UDP-L-Ara4N formyltransferase subfamily. The protein in the C-terminal section; belongs to the NAD(P)-dependent epimerase/dehydratase family. UDP-glucuronic acid decarboxylase subfamily. In terms of assembly, homohexamer, formed by a dimer of trimers.

The enzyme catalyses UDP-alpha-D-glucuronate + NAD(+) = UDP-beta-L-threo-pentopyranos-4-ulose + CO2 + NADH. The catalysed reaction is UDP-4-amino-4-deoxy-beta-L-arabinose + (6R)-10-formyltetrahydrofolate = UDP-4-deoxy-4-formamido-beta-L-arabinose + (6S)-5,6,7,8-tetrahydrofolate + H(+). It functions in the pathway nucleotide-sugar biosynthesis; UDP-4-deoxy-4-formamido-beta-L-arabinose biosynthesis; UDP-4-deoxy-4-formamido-beta-L-arabinose from UDP-alpha-D-glucuronate: step 1/3. Its pathway is nucleotide-sugar biosynthesis; UDP-4-deoxy-4-formamido-beta-L-arabinose biosynthesis; UDP-4-deoxy-4-formamido-beta-L-arabinose from UDP-alpha-D-glucuronate: step 3/3. It participates in bacterial outer membrane biogenesis; lipopolysaccharide biosynthesis. Functionally, bifunctional enzyme that catalyzes the oxidative decarboxylation of UDP-glucuronic acid (UDP-GlcUA) to UDP-4-keto-arabinose (UDP-Ara4O) and the addition of a formyl group to UDP-4-amino-4-deoxy-L-arabinose (UDP-L-Ara4N) to form UDP-L-4-formamido-arabinose (UDP-L-Ara4FN). The modified arabinose is attached to lipid A and is required for resistance to polymyxin and cationic antimicrobial peptides. The polypeptide is Bifunctional polymyxin resistance protein ArnA (Yersinia pestis bv. Antiqua (strain Antiqua)).